A 1180-amino-acid chain; its full sequence is MARHGDTRSPSPVGSTYSSSRRNRRDDDRYERSRRDDGRSYRRSRSPERRYRERERDRDRDAFRRRDRSLDRRDEDSYRPGRRERSRDRRRSRERDDYRRRSRDRDYRSRREDSRDRARRRTDDSADLKYKSRRDDSRDRAKDAPRSRETSKPSTPAATAAPTEDEKRAERLAKLEAWKQKQAAEKERKQREAAAAGGARSILEEIDRKSGLSPAVSSPQSPATPGVDATPGTYTGKFDPKAIAKSASSTPAPPAVLGNDVAVPPSVKPVTTIPSQVKPKSTTSASATLKAKGNVGGFGLGTKQAADTEKSTATKTLGFGEEESTRRKLERLPTPPLEDAKDVNGTADGAADEDEDDVDMQDGGTEEEAAAAARAAAERREERLQSEAIKAQSNGAESNDTVMGDAPSQEAADNMEVDAQEEEEIDPLDAFMSELAESAPPKKKVGAKFSRTKEQQPEALFGDEHDIDMTAVGDGDADDFLAIANKAKKKKDIPAVDHKKVEYETFRKKFYTEPSDLAQMSDEEAASLRLELDGIKVRGVDVPKPVQKWSQCGLGVQTLDVIDKLGYEKTTSIQAQAIPAIMSGRDVIGVAKTGSGKTIAFLIPMFRHIKDQRPLDNMEGPVGLIMTPTRELATQIHKDCKPFLKALNLRAVCAYGGAPIKDQIADLKRGAEIIVCTPGRMIDLLAANAGRVTNLRRVTYVVLDEADRMFDMGFEPQVMKIMANIRPDRQTVLFSATFPRNMEALARKTLTKPIEIVVGGKSVVAPEITQIVEVRNDDQKFVRLLELLGNLYSSDENEDARALIFVDRQEAADALLRELMRKGYPCMSIHGGKDQIDRDSTIEDFKAGIFPVLIATSVAARGLDVKQLKLVVNYDAPNHLEDYVHRAGRTGRAGNTGTAVTFLTEDQERYSVDIAKALKQSGQKVPEPVQKLVDAFLEKVKAGKEKASASGFGGKGLERLDQERDAARMRERRTYKTGEEGEDEEEKEEKNEQAEERFNKAISSVQSTAAPSLPGVPKGIDLDGKITVHKTEKDPNSTSKNPLDKVGSAVADIHARLSRAGVMRSGVPIDNRGPDAGAFHATLEINDFPQKARWAVTNRTNVAKILEATGTSITTKGSFYPTGKVPGPGENPKLYILVEGETELAVTNAMRELMRLLKEGTIAAADSDARAPVGGRYNVV.

A disordered region spans residues 1 to 421; it reads MARHGDTRSP…ADNMEVDAQE (421 aa). Positions 8 to 20 are enriched in low complexity; that stretch reads RSPSPVGSTYSSS. Residues 24–151 show a composition bias toward basic and acidic residues; the sequence is RRDDDRYERS…KDAPRSRETS (128 aa). Residues 152–162 show a composition bias toward low complexity; sequence KPSTPAATAAP. Residues 164–192 are compositionally biased toward basic and acidic residues; that stretch reads EDEKRAERLAKLEAWKQKQAAEKERKQRE. Positions 241–250 are enriched in low complexity; it reads KAIAKSASST. Residues 272 to 287 show a composition bias toward polar residues; sequence TIPSQVKPKSTTSASA. The span at 350-369 shows a compositional bias: acidic residues; that stretch reads AADEDEDDVDMQDGGTEEEA. A compositionally biased stretch (basic and acidic residues) spans 376–385; the sequence is AAERREERLQ. A compositionally biased stretch (polar residues) spans 391 to 401; the sequence is AQSNGAESNDT. The Q motif motif lies at 547-575; that stretch reads QKWSQCGLGVQTLDVIDKLGYEKTTSIQA. Positions 578-756 constitute a Helicase ATP-binding domain; the sequence is IPAIMSGRDV…RKTLTKPIEI (179 aa). 591 to 598 lines the ATP pocket; that stretch reads AKTGSGKT. A DEAD box motif is present at residues 704–707; the sequence is DEAD. Residues 783–933 enclose the Helicase C-terminal domain; that stretch reads RLLELLGNLY…KVPEPVQKLV (151 aa). The disordered stretch occupies residues 947 to 996; that stretch reads ASASGFGGKGLERLDQERDAARMRERRTYKTGEEGEDEEEKEEKNEQAEE. Positions 956 to 979 are enriched in basic and acidic residues; the sequence is GLERLDQERDAARMRERRTYKTGE.

The protein belongs to the DEAD box helicase family. DDX46/PRP5 subfamily.

Its subcellular location is the nucleus. The catalysed reaction is ATP + H2O = ADP + phosphate + H(+). In terms of biological role, ATP-dependent RNA helicase involved spliceosome assembly and in nuclear splicing. Catalyzes an ATP-dependent conformational change of U2 snRNP. Bridges U1 and U2 snRNPs and enables stable U2 snRNP association with intron RNA. This chain is Pre-mRNA-processing ATP-dependent RNA helicase prp5 (prp5), found in Aspergillus niger (strain ATCC MYA-4892 / CBS 513.88 / FGSC A1513).